Here is a 283-residue protein sequence, read N- to C-terminus: Bifunctional protein FolD (283 aa).

Residues 165 to 167 (GRS), Ser-190, and Val-231 contribute to the NADP(+) site.

The protein belongs to the tetrahydrofolate dehydrogenase/cyclohydrolase family. In terms of assembly, homodimer. Interacts with BrxC.

It carries out the reaction (6R)-5,10-methylene-5,6,7,8-tetrahydrofolate + NADP(+) = (6R)-5,10-methenyltetrahydrofolate + NADPH. The enzyme catalyses (6R)-5,10-methenyltetrahydrofolate + H2O = (6R)-10-formyltetrahydrofolate + H(+). It participates in one-carbon metabolism; tetrahydrofolate interconversion. Its function is as follows. Catalyzes the oxidation of 5,10-methylenetetrahydrofolate to 5,10-methenyltetrahydrofolate and then the hydrolysis of 5,10-methenyltetrahydrofolate to 10-formyltetrahydrofolate. This chain is Bifunctional protein FolD, found in Bacillus subtilis (strain 168).